Here is a 230-residue protein sequence, read N- to C-terminus: Ribonuclease HII (230 aa).

The RNase H type-2 domain occupies 1–224; sequence MIIIGIDEAG…CKRILDKSKQ (224 aa). The a divalent metal cation site is built by D7, E8, and D112.

The protein belongs to the RNase HII family. It depends on Mn(2+) as a cofactor. Requires Mg(2+) as cofactor.

It is found in the cytoplasm. The enzyme catalyses Endonucleolytic cleavage to 5'-phosphomonoester.. Endonuclease that specifically degrades the RNA of RNA-DNA hybrids. In Methanocaldococcus jannaschii (strain ATCC 43067 / DSM 2661 / JAL-1 / JCM 10045 / NBRC 100440) (Methanococcus jannaschii), this protein is Ribonuclease HII (rnhB).